We begin with the raw amino-acid sequence, 207 residues long: Holliday junction branch migration complex subunit RuvA (207 aa).

The interval Met-1–Glu-63 is domain I. The tract at residues Ser-64–Glu-142 is domain II. Residues Pro-143–Glu-154 are flexible linker. A domain III region spans residues Val-155–Asn-207.

Belongs to the RuvA family. As to quaternary structure, homotetramer. Forms an RuvA(8)-RuvB(12)-Holliday junction (HJ) complex. HJ DNA is sandwiched between 2 RuvA tetramers; dsDNA enters through RuvA and exits via RuvB. An RuvB hexamer assembles on each DNA strand where it exits the tetramer. Each RuvB hexamer is contacted by two RuvA subunits (via domain III) on 2 adjacent RuvB subunits; this complex drives branch migration. In the full resolvosome a probable DNA-RuvA(4)-RuvB(12)-RuvC(2) complex forms which resolves the HJ.

The protein localises to the cytoplasm. The RuvA-RuvB-RuvC complex processes Holliday junction (HJ) DNA during genetic recombination and DNA repair, while the RuvA-RuvB complex plays an important role in the rescue of blocked DNA replication forks via replication fork reversal (RFR). RuvA specifically binds to HJ cruciform DNA, conferring on it an open structure. The RuvB hexamer acts as an ATP-dependent pump, pulling dsDNA into and through the RuvAB complex. HJ branch migration allows RuvC to scan DNA until it finds its consensus sequence, where it cleaves and resolves the cruciform DNA. This chain is Holliday junction branch migration complex subunit RuvA, found in Corynebacterium kroppenstedtii (strain DSM 44385 / JCM 11950 / CIP 105744 / CCUG 35717).